The chain runs to 411 residues: CinA-like protein (411 aa).

The protein belongs to the CinA family.

The chain is CinA-like protein from Dictyoglomus turgidum (strain DSM 6724 / Z-1310).